The following is a 198-amino-acid chain: V-type proton ATPase subunit E (198 aa).

It belongs to the V-ATPase E subunit family.

In terms of biological role, produces ATP from ADP in the presence of a proton gradient across the membrane. This Borrelia turicatae (strain 91E135) protein is V-type proton ATPase subunit E.